The following is a 416-amino-acid chain: MAIAERRSRSHLALRVRDRVSAEVFFEERFEDGWESKWVKSDWKRDENMAGEWNFTSGKWNGDANDKGIQTSEDYRFYAISAAFPEFSNKGKTLVFQFSVKHEQKLDCGGGYMKLLSGDVDQKKFGGDTPYSIMFGPDICGYSTKKVHAILTKGETNHLIKKDVPCETDQLTHVYTFILRPDASYSILIDNVEKQSGSVYTDWDILPPKQIKDPEAKKPEDWEDKEYIPDPEDKKPEGYDDIPKEITDPEAKKPEDWDDEEDGEWTAPTIPNPDYKGEWKPKKIKNPNFKGKWKAPMIDNPDFKDDPDIYVFPKLKYVGIELWQVKSGTMFDNVLICDDPDYAKKLAEETWGKNKDAEKAAFDEAEKKKEEEEAKDDPTESDDEKPDEEGESDGEGDDESKDIDNEEDDEDVHDEL.

Residue asparagine 54 is glycosylated (N-linked (GlcNAc...) asparagine). A disulfide bridge links cysteine 108 with cysteine 140. Residues tyrosine 112, lysine 114, tyrosine 131, and aspartate 138 each coordinate an alpha-D-glucoside. 7 repeat units span residues 194 to 205 (KQSGSVYTDWDI), 213 to 224 (DPEAKKPEDWED), 230 to 241 (DPEDKKPEGYDD), 248 to 259 (DPEAKKPEDWDD), 263 to 273 (GEWTAPTIPNP), 277 to 287 (GEWKPKKIKNP), and 291 to 301 (GKWKAPMIDNP). Residues 194–259 (KQSGSVYTDW…EAKKPEDWDD (66 aa)) form a 4 X approximate repeats region. Residues 209–281 (KQIKDPEAKK…NPDYKGEWKP (73 aa)) are disordered. Positions 210–255 (QIKDPEAKKPEDWEDKEYIPDPEDKKPEGYDDIPKEITDPEAKKPE) are enriched in basic and acidic residues. The 3 X approximate repeats stretch occupies residues 263-301 (GEWTAPTIPNPDYKGEWKPKKIKNPNFKGKWKAPMIDNP). An alpha-D-glucoside is bound at residue glutamate 321. Over residues 349–378 (ETWGKNKDAEKAAFDEAEKKKEEEEAKDDP) the composition is skewed to basic and acidic residues. The disordered stretch occupies residues 349-416 (ETWGKNKDAE…EDDEDVHDEL (68 aa)). The span at 379-416 (TESDDEKPDEEGESDGEGDDESKDIDNEEDDEDVHDEL) shows a compositional bias: acidic residues. The short motif at 413–416 (HDEL) is the Prevents secretion from ER element.

Belongs to the calreticulin family.

It is found in the endoplasmic reticulum lumen. Its function is as follows. Molecular calcium-binding chaperone promoting folding, oligomeric assembly and quality control in the ER via the calreticulin/calnexin cycle. This lectin may interact transiently with almost all of the monoglucosylated glycoproteins that are synthesized in the ER. This is Calreticulin from Berberis stolonifera (Barberry).